The primary structure comprises 900 residues: Translation initiation factor IF-2 (900 aa).

Residues 48 to 310 are disordered; it reads HLNRDRGNAP…KPSSLQQSFN (263 aa). Residues 68 to 82 are compositionally biased toward polar residues; that stretch reads STLNVPSTGGKSKSV. Basic and acidic residues-rich tracts occupy residues 85 to 98 and 108 to 164; these read EVRKTRTYVKRDPI and QARR…KEKV. Residues 165–176 are compositionally biased toward polar residues; it reads TNQQNENMTKPA. The segment covering 177-237 has biased composition (basic and acidic residues); it reads QSEKAKREAE…SATKPEESAD (61 aa). Residues 263 to 277 show a composition bias toward basic residues; sequence TRTRAAKVTKQKKGN. Over residues 278-291 the composition is skewed to basic and acidic residues; the sequence is RQSESKADREEARA. Positions 399–568 constitute a tr-type G domain; it reads FRAPVVTIMG…LLQAEVLELK (170 aa). The segment at 408–415 is G1; the sequence is GHVDHGKT. 408–415 contributes to the GTP binding site; that stretch reads GHVDHGKT. Positions 433 to 437 are G2; the sequence is GITQH. Residues 454-457 form a G3 region; the sequence is DTPG. GTP is bound by residues 454 to 458 and 508 to 511; these read DTPGH and NKID. The tract at residues 508–511 is G4; it reads NKID. Positions 544-546 are G5; the sequence is SAK.

This sequence belongs to the TRAFAC class translation factor GTPase superfamily. Classic translation factor GTPase family. IF-2 subfamily.

The protein localises to the cytoplasm. Functionally, one of the essential components for the initiation of protein synthesis. Protects formylmethionyl-tRNA from spontaneous hydrolysis and promotes its binding to the 30S ribosomal subunits. Also involved in the hydrolysis of GTP during the formation of the 70S ribosomal complex. This is Translation initiation factor IF-2 from Pectobacterium atrosepticum (strain SCRI 1043 / ATCC BAA-672) (Erwinia carotovora subsp. atroseptica).